Here is a 231-residue protein sequence, read N- to C-terminus: Large ribosomal subunit protein uL1 (231 aa).

This sequence belongs to the universal ribosomal protein uL1 family. Part of the 50S ribosomal subunit.

Its function is as follows. Binds directly to 23S rRNA. The L1 stalk is quite mobile in the ribosome, and is involved in E site tRNA release. In terms of biological role, protein L1 is also a translational repressor protein, it controls the translation of the L11 operon by binding to its mRNA. The chain is Large ribosomal subunit protein uL1 from Moorella thermoacetica (strain ATCC 39073 / JCM 9320).